The following is a 147-amino-acid chain: Hemoglobin subunit beta-2 (147 aa).

A Globin domain is found at 3–147; sequence EWTDEERTII…VVSALGRQYH (145 aa). Residues histidine 64 and histidine 93 each contribute to the heme b site.

This sequence belongs to the globin family. Hb 2 is a heterotetramer of two alpha-2 and two beta-2 chains. Hb 3 is a heterotetramer of two alpha-1 and two beta-2 chains. Red blood cells.

Involved in oxygen transport from gills to the various peripheral tissues. The protein is Hemoglobin subunit beta-2 (hbb2) of Gadus morhua (Atlantic cod).